The chain runs to 741 residues: Catalase-peroxidase 2 (741 aa).

Residues methionine 1–alanine 28 form the signal peptide. The tryptophyl-tyrosyl-methioninium (Trp-Tyr) (with M-254) cross-link spans tryptophan 107–tyrosine 228. Histidine 108 acts as the Proton acceptor in catalysis. The tryptophyl-tyrosyl-methioninium (Tyr-Met) (with W-107) cross-link spans tyrosine 228 to methionine 254. Residue histidine 269 coordinates heme b.

The protein belongs to the peroxidase family. Peroxidase/catalase subfamily. In terms of assembly, homodimer or homotetramer. Requires heme b as cofactor. Post-translationally, formation of the three residue Trp-Tyr-Met cross-link is important for the catalase, but not the peroxidase activity of the enzyme.

It carries out the reaction H2O2 + AH2 = A + 2 H2O. The enzyme catalyses 2 H2O2 = O2 + 2 H2O. Its function is as follows. Bifunctional enzyme with both catalase and broad-spectrum peroxidase activity. This is Catalase-peroxidase 2 from Burkholderia ambifaria (strain MC40-6).